The following is a 192-amino-acid chain: Secreted phosphoprotein 24 (192 aa).

The first 29 residues, Met1 to Gly29, serve as a signal peptide directing secretion. 2 disulfide bridges follow: Cys92-Cys103 and Cys116-Cys134. The segment at Thr155–Glu192 is disordered.

Belongs to the SPP2 family. Post-translationally, multiply phosphorylated at serine residues.

Its subcellular location is the secreted. Functionally, could coordinate an aspect of bone turnover. This Gallus gallus (Chicken) protein is Secreted phosphoprotein 24 (SPP2).